The following is a 66-amino-acid chain: DNA-directed RNA polymerase subunit omega (66 aa).

The protein belongs to the RNA polymerase subunit omega family. As to quaternary structure, the RNAP catalytic core consists of 2 alpha, 1 beta, 1 beta' and 1 omega subunit. When a sigma factor is associated with the core the holoenzyme is formed, which can initiate transcription.

The catalysed reaction is RNA(n) + a ribonucleoside 5'-triphosphate = RNA(n+1) + diphosphate. In terms of biological role, promotes RNA polymerase assembly. Latches the N- and C-terminal regions of the beta' subunit thereby facilitating its interaction with the beta and alpha subunits. This is DNA-directed RNA polymerase subunit omega from Geobacillus kaustophilus (strain HTA426).